Reading from the N-terminus, the 216-residue chain is Endoplasmic reticulum vesicle protein 25 (216 aa).

An N-terminal signal peptide occupies residues 1–20; that stretch reads MASLKSLLSGFLLLAGAAQA. Topologically, residues 21–185 are lumenal; that stretch reads LKFDLEATSS…TNESTNNRVK (165 aa). The 91-residue stretch at 36 to 126 folds into the GOLD domain; sequence RRCIRNFVNK…RRHVELDIDI (91 aa). A helical membrane pass occupies residues 186–206; it reads WFGMATTFLLIALWGWQIMYL. The Cytoplasmic segment spans residues 207 to 216; it reads RAYFRSKHLI.

Belongs to the EMP24/GP25L family.

The protein localises to the endoplasmic reticulum membrane. Its subcellular location is the golgi apparatus membrane. Functionally, constituent of COPII-coated endoplasmic reticulum-derived transport vesicles. Required for efficient transport of a subset of secretory proteins to the Golgi. Facilitates retrograde transport from the Golgi to the endoplasmic reticulum. This Neurospora crassa (strain ATCC 24698 / 74-OR23-1A / CBS 708.71 / DSM 1257 / FGSC 987) protein is Endoplasmic reticulum vesicle protein 25 (erv-1).